A 1452-amino-acid chain; its full sequence is Receptor-type tyrosine-protein phosphatase mu (1452 aa).

Positions 1–20 (MRTLGTCLVTLAGLLLTAAG) are cleaved as a signal peptide. Residues 21 to 742 (ETFSGGCLFD…PEKQTDHTVK (722 aa)) lie on the Extracellular side of the membrane. The region spanning 22 to 184 (TFSGGCLFDE…VKVLGHPCTR (163 aa)) is the MAM domain. A disulfide bridge links Cys-27 with Cys-36. N-linked (GlcNAc...) asparagine glycans are attached at residues Asn-72, Asn-92, Asn-131, and Asn-249. Intrachain disulfides connect Cys-96–Cys-182 and Cys-206–Cys-260. An Ig-like C2-type domain is found at 186-277 (PHFLRIQNVE…VGISNYAELV (92 aa)). Fibronectin type-III domains are found at residues 284-379 (PIAP…CADP), 382-480 (GPRK…TDED), 481-587 (LPGA…SAPS), and 589-671 (PAYE…DSLQ). 8 N-linked (GlcNAc...) asparagine glycosylation sites follow: Asn-406, Asn-414, Asn-454, Asn-534, Asn-544, Asn-598, Asn-651, and Asn-681. The chain crosses the membrane as a helical span at residues 743-764 (IAGVIAGILLFVIIFLGVVLVM). Residues 765 to 1452 (KKRKLAKKRK…EVALEYLNSG (688 aa)) are Cytoplasmic-facing. Ser-821 is modified (phosphoserine). Tyrosine-protein phosphatase domains are found at residues 900 to 1154 (FKEE…ILEA) and 1186 to 1448 (IKEE…ALEY). Residues Asp-1063, 1095 to 1101 (CSAGAGR), and Gln-1139 contribute to the substrate site. Cys-1095 functions as the Phosphocysteine intermediate in the catalytic mechanism. The active-site Phosphocysteine intermediate is Cys-1389.

Belongs to the protein-tyrosine phosphatase family. Receptor class 2B subfamily. As to quaternary structure, homodimer. In terms of tissue distribution, most abundant in lung, less in brain and heart.

The protein resides in the cell membrane. It carries out the reaction O-phospho-L-tyrosyl-[protein] + H2O = L-tyrosyl-[protein] + phosphate. Receptor protein-tyrosine phosphatase that mediates homotypic cell-cell interactions and plays a role in adipogenic differentiation via modulation of p120 catenin/CTNND1 phosphorylation. Promotes CTNND1 dephosphorylation and prevents its cytoplasmic localization where it inhibits SLC2A4 membrane trafficking. In turn, SLC2A4 is directed to the plasma membrane and performs its glucose transporter function. The chain is Receptor-type tyrosine-protein phosphatase mu (Ptprm) from Mus musculus (Mouse).